The chain runs to 968 residues: MPFSLGQRWISDTESELGLGTVVAVEGRMVTVMFPATDENRMFSRADAPLTRVIFNPGDKAESHEGWSLTVSEVEEKDNLIIYHGIHDETGEQVSLRETLLNHNIRFNKPQDRLFAGQIDRLERFGIRYQCQQLRHKLATSDMLGLQGPRVGLIPHQQWIAHEVGRRFAPRVLLADEVGLGKTIEAGLIIHQQLLTGRAERILVIVPDTLRHQWLVEMLRRFNLKFSVFDEDRCVEAYADSDNPFYTEQLVICSLELLRKKRRLDQALAADWDLMVVDEAHHLEWTEDAPSRAYRIVEALSEEIPGVLLLTATPDQLGHQSHFARLRLLDPDRFYDYEAFLKEETNYADIASTADALAGNEPLSQEIIDNLKTQLAEKDITAATDIIQATDADVDQQQAARDALLQDLLDRHGTGRVLYRNSRASVKGFPTRIFNQYPQKMPAQYVTAARVGAMMNGHLDTAGKVKQALSPEKIYQEFESSSASWWKFDPRVDWLIDFLKENRREKVLIIASQAETALSLEEALRTREGIQATVFHEGMSIIERDKAGAYFAQETGGAQALICSEIGSEGRNFQFASQLILFDLPLNPDLLEQRIGRLDRIGQNNDVSIHVPYLEDTAQESLMQWYHKGLNAFEQTCPSGHILFNEFSESLLNVLISQDKEVLEQVLSDTQTRYAELKSVMEQGRDKLLEINSHGGERANKLVNALAERDEDTNLIGSVIRLWDIIGVEQEDSGENAIVLRPSEHMMFPTYPGLPEDGITVTFDREMALSRDDIALITQEHPLVQTGLDLITSSETGTTSVAVLKNKSLPAGTIFLELIYMADASAPKSSQLYRYLPPTPVRVLLDKNGNNLADNVNYESFNKQLSAVNRHIASKLVNASQAVLHPLFAKGEEFASSELTLLTESSRAKMTTQLNGELERLEALKAVNPNIRDEELAHLREQMVELNGYLDGAVLQLDAIRLVLVSHA.

Residues 163 to 332 (EVGRRFAPRV…FARLRLLDPD (170 aa)) enclose the Helicase ATP-binding domain. 176-183 (DEVGLGKT) provides a ligand contact to ATP. Residues 278–281 (DEAH) carry the DEAH box motif. Residues 491-645 (RVDWLIDFLK…TCPSGHILFN (155 aa)) enclose the Helicase C-terminal domain.

The protein belongs to the SNF2/RAD54 helicase family. RapA subfamily. Interacts with the RNAP. Has a higher affinity for the core RNAP than for the holoenzyme. Its ATPase activity is stimulated by binding to RNAP.

Transcription regulator that activates transcription by stimulating RNA polymerase (RNAP) recycling in case of stress conditions such as supercoiled DNA or high salt concentrations. Probably acts by releasing the RNAP, when it is trapped or immobilized on tightly supercoiled DNA. Does not activate transcription on linear DNA. Probably not involved in DNA repair. This Shewanella woodyi (strain ATCC 51908 / MS32) protein is RNA polymerase-associated protein RapA.